A 239-amino-acid chain; its full sequence is Cysteine-rich venom protein (239 aa).

The signal sequence occupies residues 1-18; it reads MIVFILLSLAAVLQQSVA. Positions 37-165 constitute an SCP domain; that stretch reads VDMHNSFRRS…PYNYFYVCQY (129 aa). Disulfide bonds link Cys74/Cys152, Cys91/Cys166, Cys147/Cys163, Cys185/Cys192, Cys188/Cys197, Cys210/Cys228, and Cys219/Cys232. In terms of domain architecture, ShKT spans 201-234; it reads CPINNVFTNCDSLLQQSSCEDSYITTNCGASCFC.

This sequence belongs to the CRISP family. In terms of tissue distribution, expressed by the venom gland.

It is found in the secreted. Functionally, blocks contraction of smooth muscle elicited by high potassium-induced depolarization, but does not block caffeine-stimulated contraction. May target voltage-gated calcium channels on smooth muscle. This chain is Cysteine-rich venom protein, found in Cerberus rynchops (Dog-faced water snake).